The sequence spans 629 residues: Phosphomethylpyrimidine synthase (629 aa).

The disordered stretch occupies residues 1-20; sequence MSTTLKNAAHLSESAQVDSG. Residues N233, M262, Y291, H327, 347–349, 388–391, and E427 each bind substrate; these read SRG and DGLR. Zn(2+) is bound at residue H431. Y454 is a binding site for substrate. H495 is a Zn(2+) binding site. Residues C575, C578, and C583 each coordinate [4Fe-4S] cluster.

This sequence belongs to the ThiC family. In terms of assembly, homodimer. The cofactor is [4Fe-4S] cluster.

It catalyses the reaction 5-amino-1-(5-phospho-beta-D-ribosyl)imidazole + S-adenosyl-L-methionine = 4-amino-2-methyl-5-(phosphooxymethyl)pyrimidine + CO + 5'-deoxyadenosine + formate + L-methionine + 3 H(+). It participates in cofactor biosynthesis; thiamine diphosphate biosynthesis. Its function is as follows. Catalyzes the synthesis of the hydroxymethylpyrimidine phosphate (HMP-P) moiety of thiamine from aminoimidazole ribotide (AIR) in a radical S-adenosyl-L-methionine (SAM)-dependent reaction. The polypeptide is Phosphomethylpyrimidine synthase (Pseudomonas savastanoi pv. phaseolicola (strain 1448A / Race 6) (Pseudomonas syringae pv. phaseolicola (strain 1448A / Race 6))).